A 224-amino-acid polypeptide reads, in one-letter code: Cytidylate kinase (224 aa).

12-20 lines the ATP pocket; the sequence is GPSGAGKGT.

It belongs to the cytidylate kinase family. Type 1 subfamily.

It is found in the cytoplasm. The catalysed reaction is CMP + ATP = CDP + ADP. The enzyme catalyses dCMP + ATP = dCDP + ADP. The sequence is that of Cytidylate kinase from Aliivibrio salmonicida (strain LFI1238) (Vibrio salmonicida (strain LFI1238)).